We begin with the raw amino-acid sequence, 764 residues long: 5-methyltetrahydropteroyltriglutamate--homocysteine methyltransferase (764 aa).

Residues 16-19 (RELK) and K112 each bind 5-methyltetrahydropteroyltri-L-glutamate. L-homocysteine is bound by residues 431-433 (IGS) and E484. Residues 431–433 (IGS) and E484 contribute to the L-methionine site. 5-methyltetrahydropteroyltri-L-glutamate-binding positions include 515-516 (RC) and W561. D599 provides a ligand contact to L-homocysteine. Residue D599 coordinates L-methionine. Position 605 (E605) interacts with 5-methyltetrahydropteroyltri-L-glutamate. Residues H641, C643, and E665 each coordinate Zn(2+). H694 serves as the catalytic Proton donor. Position 726 (C726) interacts with Zn(2+).

Belongs to the vitamin-B12 independent methionine synthase family. The cofactor is Zn(2+).

The enzyme catalyses 5-methyltetrahydropteroyltri-L-glutamate + L-homocysteine = tetrahydropteroyltri-L-glutamate + L-methionine. The protein operates within amino-acid biosynthesis; L-methionine biosynthesis via de novo pathway; L-methionine from L-homocysteine (MetE route): step 1/1. Its function is as follows. Catalyzes the transfer of a methyl group from 5-methyltetrahydrofolate to homocysteine resulting in methionine formation. The chain is 5-methyltetrahydropteroyltriglutamate--homocysteine methyltransferase from Paraburkholderia phytofirmans (strain DSM 17436 / LMG 22146 / PsJN) (Burkholderia phytofirmans).